The sequence spans 1171 residues: Pyruvate-flavodoxin oxidoreductase (1171 aa).

4Fe-4S ferredoxin-type domains follow at residues 682–711 (EVPVWQPEGCTQCNQCAFICPHAAIRPALL) and 736–767 (YHLAISPLDCSGCGNCVDICPARGKALKMQSL). The [4Fe-4S] cluster site is built by cysteine 691, cysteine 694, cysteine 697, cysteine 701, cysteine 745, cysteine 748, cysteine 751, cysteine 755, cysteine 811, cysteine 814, cysteine 839, and cysteine 1072.

The protein belongs to the pyruvate:ferredoxin/flavodoxin oxidoreductase family. [4Fe-4S] cluster serves as cofactor.

It catalyses the reaction oxidized [flavodoxin] + pyruvate + CoA + 2 H(+) = reduced [flavodoxin] + acetyl-CoA + CO2. Functionally, oxidoreductase required for the transfer of electrons from pyruvate to flavodoxin, which reduces nitrogenase. The chain is Pyruvate-flavodoxin oxidoreductase (nifJ) from Klebsiella pneumoniae.